Reading from the N-terminus, the 157-residue chain is ATP synthase subunit b (157 aa).

Residues methionine 7–isoleucine 29 traverse the membrane as a helical segment.

It belongs to the ATPase B chain family. F-type ATPases have 2 components, F(1) - the catalytic core - and F(0) - the membrane proton channel. F(1) has five subunits: alpha(3), beta(3), gamma(1), delta(1), epsilon(1). F(0) has three main subunits: a(1), b(2) and c(10-14). The alpha and beta chains form an alternating ring which encloses part of the gamma chain. F(1) is attached to F(0) by a central stalk formed by the gamma and epsilon chains, while a peripheral stalk is formed by the delta and b chains.

Its subcellular location is the cell inner membrane. Functionally, f(1)F(0) ATP synthase produces ATP from ADP in the presence of a proton or sodium gradient. F-type ATPases consist of two structural domains, F(1) containing the extramembraneous catalytic core and F(0) containing the membrane proton channel, linked together by a central stalk and a peripheral stalk. During catalysis, ATP synthesis in the catalytic domain of F(1) is coupled via a rotary mechanism of the central stalk subunits to proton translocation. Its function is as follows. Component of the F(0) channel, it forms part of the peripheral stalk, linking F(1) to F(0). The sequence is that of ATP synthase subunit b from Ruthia magnifica subsp. Calyptogena magnifica.